Consider the following 418-residue polypeptide: Putative ion-transport protein YfeO (418 aa).

The next 12 membrane-spanning stretches (helical) occupy residues 10 to 30, 54 to 74, 99 to 119, 120 to 140, 149 to 169, 186 to 206, 223 to 243, 258 to 278, 300 to 320, 322 to 342, 343 to 363, and 371 to 391; these read LLLS…LIMV, DSPL…GLVI, ALPG…SLGP, EHPI…RLLP, ILAS…AALI, LFAP…FFHP, ILSG…AVWC, VFVL…GGPV, DYFL…ASGF, GGRI…LHEH, VPAV…VLVV, and LFMA…CIVM.

Belongs to the chloride channel (TC 2.A.49) family.

The protein resides in the cell membrane. In Escherichia coli O127:H6 (strain E2348/69 / EPEC), this protein is Putative ion-transport protein YfeO.